The primary structure comprises 325 residues: Olfactory receptor 5T18 (325 aa).

Topologically, residues 1 to 22 are extracellular; it reads MRNITEATFFVLKGLTDNNELQ. An N-linked (GlcNAc...) asparagine glycan is attached at Asn3. The next 2 membrane-spanning stretches (helical) occupy residues 23–43 and 44–64; these read IILF…NVGL and IILV…LSVL. The Extracellular portion of the chain corresponds to 65-97; sequence SSVDACYSTDITPNMLVGFMSKSKIISFYGCAT. A disulfide bridge links Cys95 with Cys187. The chain crosses the membrane as a helical span at residues 98 to 118; that stretch reads QMFLAVTFGTTECFLLAAMAY. The Cytoplasmic portion of the chain corresponds to 119–139; it reads DRYVAIHDPLLYAVSMSPRVY. The chain crosses the membrane as a helical span at residues 140–160; the sequence is IPLIIASYAGGIVHAIIHTVA. Over 161 to 194 the chain is Extracellular; sequence TFSLSFCRSNEVKHIFCDIPPLLAISCSETYVNE. Residues 195–215 form a helical membrane-spanning segment; that stretch reads LLLFFFVSFIELVTILIVLVS. The Cytoplasmic segment spans residues 216–234; the sequence is YAFILLSILKMNSSEGRRK. Residues 235–255 traverse the membrane as a helical segment; the sequence is VFSTCGAHLTAVSIYYGTILF. The Extracellular portion of the chain corresponds to 256-269; it reads MYVRPSSNYSLEHD. Residues 270–290 traverse the membrane as a helical segment; sequence MIVSTFYTIGIPMLNPIIYSL. Topologically, residues 291–325 are cytoplasmic; it reads RNKDVKEAMKRVLRKKINIKHRIKKLNDFSVFLMP.

The protein belongs to the G-protein coupled receptor 1 family.

The protein resides in the cell membrane. Potential odorant receptor. The polypeptide is Olfactory receptor 5T18 (Mus musculus (Mouse)).